We begin with the raw amino-acid sequence, 118 residues long: Large ribosomal subunit protein bL20 (118 aa).

This sequence belongs to the bacterial ribosomal protein bL20 family.

Binds directly to 23S ribosomal RNA and is necessary for the in vitro assembly process of the 50S ribosomal subunit. It is not involved in the protein synthesizing functions of that subunit. In Psychrobacter sp. (strain PRwf-1), this protein is Large ribosomal subunit protein bL20.